We begin with the raw amino-acid sequence, 904 residues long: Putative pentatricopeptide repeat-containing protein At1g19290 (904 aa).

PPR repeat units lie at residues 154–188 (SPTVFDMILKVYAEKGLVKNALHVFDNMGNYGRIP), 189–223 (SLLSCNSLLSNLVRKGENFVALHVYDQMISFEVSP), 224–254 (DVFTCSIVVNAYCRSGNVDKAMVFAKETESS), 260–294 (NVVTYNSLINGYAMIGDVEGMTRVLRLMSERGVSR), 295–329 (NVVTYTSLIKGYCKKGLMEEAEHVFELLKEKKLVA), 330–364 (DQHMYGVLMDGYCRTGQIRDAVRVHDNMIEIGVRT), 365–399 (NTTICNSLINGYCKSGQLVEAEQIFSRMNDWSLKP), 400–434 (DHHTYNTLVDGYCRAGYVDEALKLCDQMCQKEVVP), 435–469 (TVMTYNILLKGYSRIGAFHDVLSLWKMMLKRGVNA), 470–504 (DEISCSTLLEALFKLGDFNEAMKLWENVLARGLLT), 505–539 (DTITLNVMISGLCKMEKVNEAKEILDNVNIFRCKP), 540–574 (AVQTYQALSHGYYKVGNLKEAFAVKEYMERKGIFP), 575–609 (TIEMYNTLISGAFKYRHLNKVADLVIELRARGLTP), 610–644 (TVATYGALITGWCNIGMIDKAYATCFEMIEKGITL), 645–679 (NVNICSKIANSLFRLDKIDEACLLLQKIVDFDLLL), 718–753 (NNIVYNVAIAGLCKAGKLEDARKLFSDLLSSDRFIP), 754–788 (DEYTYTILIHGCAIAGDINKAFTLRDEMALKGIIP), 789–823 (NIVTYNALIKGLCKLGNVDRAQRLLHKLPQKGITP), and 824–858 (NAITYNTLIDGLVKSGNVAEAMRLKEKMIEKGLVR).

It belongs to the PPR family. P subfamily.

The sequence is that of Putative pentatricopeptide repeat-containing protein At1g19290 from Arabidopsis thaliana (Mouse-ear cress).